We begin with the raw amino-acid sequence, 880 residues long: Tyrosine-protein kinase receptor TYRO3 (880 aa).

A signal peptide spans 1–28; the sequence is MVYPGPPGLIAGLLLAALSLSCVDGAKA. Ig-like C2-type domains lie at 29 to 114 and 125 to 206; these read LGFV…KSVS and PYFT…AIVE. Over 29–414 the chain is Extracellular; sequence LGFVGHGYNL…QRHPHTRMSW (386 aa). 2 N-linked (GlcNAc...) asparagine glycosylation sites follow: Asn-37 and Asn-49. Cysteines 50 and 103 form a disulfide. A glycan (N-linked (GlcNAc...) asparagine) is linked at Asn-143. The cysteines at positions 146 and 189 are disulfide-linked. 2 consecutive Fibronectin type-III domains span residues 213-306 and 311-401; these read PPFN…TKET and LPQN…SKEE. Asn-216, Asn-279, Asn-351, and Asn-365 each carry an N-linked (GlcNAc...) asparagine glycan. A helical transmembrane segment spans residues 415–435; it reads VPMVLGILTALVTVVAMTLIF. The Cytoplasmic segment spans residues 436–880; that stretch reads LRKGRKETRF…MQEEQVVITL (445 aa). A Protein kinase domain is found at 503–774; that stretch reads FTLGRTLGKG…VDLKQRLEAI (272 aa). Residues 509–517 and Lys-535 each bind ATP; that span reads LGKGEFGSV. Asp-640 serves as the catalytic Proton acceptor. Residue Tyr-671 is modified to Phosphotyrosine; by autocatalysis. Residues 846–880 are disordered; sequence EWSSSAQNGEARGLLHEEEEEEEEEMQEEQVVITL. The segment covering 862 to 873 has biased composition (acidic residues); it reads EEEEEEEEEMQE.

The protein belongs to the protein kinase superfamily. Tyr protein kinase family. AXL/UFO subfamily. In terms of processing, tyrosine phosphorylated upon receptor stimulation. In terms of tissue distribution, detected in brain, spinal cord, intestine, lung, stomach, ovary, testis, skin and eye.

It is found in the cell membrane. It catalyses the reaction L-tyrosyl-[protein] + ATP = O-phospho-L-tyrosyl-[protein] + ADP + H(+). Functionally, may be involved in cell adhesion processes, particularly in the central nervous system. The protein is Tyrosine-protein kinase receptor TYRO3 (tyro3) of Xenopus laevis (African clawed frog).